The sequence spans 729 residues: Fatty acid oxidation complex subunit alpha (729 aa).

The segment at 1–189 is enoyl-CoA hydratase/isomerase; the sequence is MLYKGDTLYL…KIGLVDGVVK (189 aa). Position 296 (D296) interacts with substrate. The 3-hydroxyacyl-CoA dehydrogenase stretch occupies residues 311–729; it reads ETPKQAAVLG…ARPVGDLKTA (419 aa). NAD(+) is bound by residues M324, D343, 400-402, K407, and S429; that span reads VVE. H450 functions as the For 3-hydroxyacyl-CoA dehydrogenase activity in the catalytic mechanism. Position 453 (N453) interacts with NAD(+). 2 residues coordinate substrate: N500 and Y660. Positions 708-729 are disordered; it reads RHNEPYYPPVEPARPVGDLKTA.

In the N-terminal section; belongs to the enoyl-CoA hydratase/isomerase family. This sequence in the C-terminal section; belongs to the 3-hydroxyacyl-CoA dehydrogenase family. Heterotetramer of two alpha chains (FadB) and two beta chains (FadA).

It catalyses the reaction a (3S)-3-hydroxyacyl-CoA + NAD(+) = a 3-oxoacyl-CoA + NADH + H(+). It carries out the reaction a (3S)-3-hydroxyacyl-CoA = a (2E)-enoyl-CoA + H2O. The enzyme catalyses a 4-saturated-(3S)-3-hydroxyacyl-CoA = a (3E)-enoyl-CoA + H2O. The catalysed reaction is (3S)-3-hydroxybutanoyl-CoA = (3R)-3-hydroxybutanoyl-CoA. It catalyses the reaction a (3Z)-enoyl-CoA = a 4-saturated (2E)-enoyl-CoA. It carries out the reaction a (3E)-enoyl-CoA = a 4-saturated (2E)-enoyl-CoA. The protein operates within lipid metabolism; fatty acid beta-oxidation. Its function is as follows. Involved in the aerobic and anaerobic degradation of long-chain fatty acids via beta-oxidation cycle. Catalyzes the formation of 3-oxoacyl-CoA from enoyl-CoA via L-3-hydroxyacyl-CoA. It can also use D-3-hydroxyacyl-CoA and cis-3-enoyl-CoA as substrate. This is Fatty acid oxidation complex subunit alpha from Shigella flexneri serotype 5b (strain 8401).